The primary structure comprises 292 residues: Homoserine kinase (292 aa).

Residue 84–94 coordinates ATP; the sequence is PLARGMGSSSA.

This sequence belongs to the GHMP kinase family. Homoserine kinase subfamily.

It localises to the cytoplasm. The enzyme catalyses L-homoserine + ATP = O-phospho-L-homoserine + ADP + H(+). It functions in the pathway amino-acid biosynthesis; L-threonine biosynthesis; L-threonine from L-aspartate: step 4/5. Its function is as follows. Catalyzes the ATP-dependent phosphorylation of L-homoserine to L-homoserine phosphate. The sequence is that of Homoserine kinase from Campylobacter lari (strain RM2100 / D67 / ATCC BAA-1060).